A 633-amino-acid polypeptide reads, in one-letter code: Probable potassium transport system protein Kup (633 aa).

12 helical membrane passes run 19-39, 61-81, 112-132, 148-168, 179-199, 217-237, 258-278, 290-310, 348-368, 380-400, 405-425, and 430-450; these read LGML…SPLY, ILAL…VLFI, VLVI…MITP, SGLE…LFLI, LFGP…INGI, FFIV…LALT, WFAL…ALLL, LLAP…ATVI, IYIG…VLGF, VAVT…MLLL, PVLA…FFAA, and IFQG…LMTT.

This sequence belongs to the HAK/KUP transporter (TC 2.A.72) family.

The protein resides in the cell inner membrane. It carries out the reaction K(+)(in) + H(+)(in) = K(+)(out) + H(+)(out). In terms of biological role, transport of potassium into the cell. Likely operates as a K(+):H(+) symporter. This is Probable potassium transport system protein Kup from Pseudomonas fluorescens (strain ATCC BAA-477 / NRRL B-23932 / Pf-5).